Reading from the N-terminus, the 267-residue chain is Indole-3-glycerol phosphate synthase (267 aa).

Belongs to the TrpC family.

The enzyme catalyses 1-(2-carboxyphenylamino)-1-deoxy-D-ribulose 5-phosphate + H(+) = (1S,2R)-1-C-(indol-3-yl)glycerol 3-phosphate + CO2 + H2O. The protein operates within amino-acid biosynthesis; L-tryptophan biosynthesis; L-tryptophan from chorismate: step 4/5. The protein is Indole-3-glycerol phosphate synthase of Cupriavidus taiwanensis (strain DSM 17343 / BCRC 17206 / CCUG 44338 / CIP 107171 / LMG 19424 / R1) (Ralstonia taiwanensis (strain LMG 19424)).